We begin with the raw amino-acid sequence, 153 residues long: Myosin regulatory light chain (153 aa).

The residue at position 1 (alanine 1) is a Blocked amino end (Ala). EF-hand domains are found at residues 15–50 (KQIQEMKEAFSMIDVDRDGFVSKDDIKAISEQLGRT) and 81–116 (DSEETIRNAFAMFDEQENKKLNIEYIKDLLEDMGNN). Aspartate 28, aspartate 30, aspartate 32, and aspartate 39 together coordinate Ca(2+).

Its function is as follows. In molluscan muscle, calcium regulation is associated with myosin rather than with actin. Muscle myosin contains two types of light chains: the catalytic light chain, essential for ATPase activity, and the regulatory light chain, a calcium-binding protein responsible for Ca(2+) dependent binding and Ca(2+) dependent Mg-ATPase activity. The protein is Myosin regulatory light chain of Patinopecten sp. (Scallop).